A 156-amino-acid polypeptide reads, in one-letter code: Small ribosomal subunit protein uS7 (156 aa).

Belongs to the universal ribosomal protein uS7 family. In terms of assembly, part of the 30S ribosomal subunit. Contacts proteins S9 and S11.

One of the primary rRNA binding proteins, it binds directly to 16S rRNA where it nucleates assembly of the head domain of the 30S subunit. Is located at the subunit interface close to the decoding center, probably blocks exit of the E-site tRNA. In Actinobacillus pleuropneumoniae serotype 5b (strain L20), this protein is Small ribosomal subunit protein uS7.